The sequence spans 284 residues: Cysteine-rich repeat secretory protein 8 (284 aa).

The first 27 residues, 1-27, serve as a signal peptide directing secretion; it reads MATFIRFTAPLFCFFFLFSLFSHQTMS. Gnk2-homologous domains follow at residues 32–136 and 151–259; these read MATF…NVSF and SLAT…TTGL.

Belongs to the cysteine-rich repeat secretory protein family.

It localises to the secreted. The polypeptide is Cysteine-rich repeat secretory protein 8 (CRRSP8) (Arabidopsis thaliana (Mouse-ear cress)).